A 372-amino-acid polypeptide reads, in one-letter code: Aminomethyltransferase (372 aa).

The protein belongs to the GcvT family. In terms of assembly, the glycine cleavage system is composed of four proteins: P, T, L and H.

It carries out the reaction N(6)-[(R)-S(8)-aminomethyldihydrolipoyl]-L-lysyl-[protein] + (6S)-5,6,7,8-tetrahydrofolate = N(6)-[(R)-dihydrolipoyl]-L-lysyl-[protein] + (6R)-5,10-methylene-5,6,7,8-tetrahydrofolate + NH4(+). Its function is as follows. The glycine cleavage system catalyzes the degradation of glycine. This Rubrobacter xylanophilus (strain DSM 9941 / JCM 11954 / NBRC 16129 / PRD-1) protein is Aminomethyltransferase.